The sequence spans 321 residues: Biotin synthase (321 aa).

The 227-residue stretch at 44–270 folds into the Radical SAM core domain; sequence RGVRIHILNN…DAEVRAAGGR (227 aa). Positions 59, 63, and 66 each coordinate [4Fe-4S] cluster. [2Fe-2S] cluster-binding residues include Cys-103, Cys-135, Cys-195, and Arg-265.

This sequence belongs to the radical SAM superfamily. Biotin synthase family. In terms of assembly, homodimer. [4Fe-4S] cluster is required as a cofactor. Requires [2Fe-2S] cluster as cofactor.

It carries out the reaction (4R,5S)-dethiobiotin + (sulfur carrier)-SH + 2 reduced [2Fe-2S]-[ferredoxin] + 2 S-adenosyl-L-methionine = (sulfur carrier)-H + biotin + 2 5'-deoxyadenosine + 2 L-methionine + 2 oxidized [2Fe-2S]-[ferredoxin]. It functions in the pathway cofactor biosynthesis; biotin biosynthesis; biotin from 7,8-diaminononanoate: step 2/2. Catalyzes the conversion of dethiobiotin (DTB) to biotin by the insertion of a sulfur atom into dethiobiotin via a radical-based mechanism. This chain is Biotin synthase, found in Magnetococcus marinus (strain ATCC BAA-1437 / JCM 17883 / MC-1).